The primary structure comprises 89 residues: Small ribosomal subunit protein uS15 (89 aa).

This sequence belongs to the universal ribosomal protein uS15 family. In terms of assembly, part of the 30S ribosomal subunit. Forms a bridge to the 50S subunit in the 70S ribosome, contacting the 23S rRNA.

Its function is as follows. One of the primary rRNA binding proteins, it binds directly to 16S rRNA where it helps nucleate assembly of the platform of the 30S subunit by binding and bridging several RNA helices of the 16S rRNA. In terms of biological role, forms an intersubunit bridge (bridge B4) with the 23S rRNA of the 50S subunit in the ribosome. The chain is Small ribosomal subunit protein uS15 from Levilactobacillus brevis (strain ATCC 367 / BCRC 12310 / CIP 105137 / JCM 1170 / LMG 11437 / NCIMB 947 / NCTC 947) (Lactobacillus brevis).